The sequence spans 422 residues: uncharacterized protein (422 aa).

This sequence belongs to the asfivirus K421R family.

It localises to the virion. This is an uncharacterized protein from Ornithodoros (relapsing fever ticks).